Reading from the N-terminus, the 420-residue chain is Ribosome biogenesis protein WDR12 homolog (420 aa).

The segment at 10–92 (VQVHLKTKQE…EDAIEIEYVE (83 aa)) is ubiquitin-like (UBL) domain. 7 WD repeats span residues 104-142 (LHDD…LTIS), 143-185 (GHTA…NSVE), 192-231 (GHER…AVEG), 250-288 (GHRE…IKTE), 290-329 (STNK…GSVV), 335-375 (GHNA…APLY), and 379-417 (GHGE…ADDA).

The protein belongs to the WD repeat WDR12/YTM1 family.

It localises to the nucleus. It is found in the nucleolus. The protein localises to the nucleoplasm. Its function is as follows. Required for maturation of ribosomal RNAs and formation of the large ribosomal subunit. This chain is Ribosome biogenesis protein WDR12 homolog, found in Drosophila yakuba (Fruit fly).